A 104-amino-acid chain; its full sequence is Probable quinol monooxygenase YgiN (104 aa).

The 99-residue stretch at Leu2–Leu100 folds into the ABM domain.

As to quaternary structure, homodimer.

It carries out the reaction menadiol + 2 O2 = menadione + 2 superoxide + 2 H(+). Its function is as follows. Can oxidize menadiol to menadione. In Escherichia coli O157:H7, this protein is Probable quinol monooxygenase YgiN (ygiN).